The following is a 412-amino-acid chain: Multifunctional CCA protein (412 aa).

2 residues coordinate ATP: G8 and R11. 2 residues coordinate CTP: G8 and R11. Residues D21 and D23 each contribute to the Mg(2+) site. 3 residues coordinate ATP: R91, R137, and R140. Residues R91, R137, and R140 each coordinate CTP. An HD domain is found at 225–326 (TGIHVMMVID…ADMLQATDAY (102 aa)).

The protein belongs to the tRNA nucleotidyltransferase/poly(A) polymerase family. Bacterial CCA-adding enzyme type 1 subfamily. In terms of assembly, monomer. Can also form homodimers and oligomers. The cofactor is Mg(2+). Ni(2+) is required as a cofactor.

The enzyme catalyses a tRNA precursor + 2 CTP + ATP = a tRNA with a 3' CCA end + 3 diphosphate. The catalysed reaction is a tRNA with a 3' CCA end + 2 CTP + ATP = a tRNA with a 3' CCACCA end + 3 diphosphate. Its function is as follows. Catalyzes the addition and repair of the essential 3'-terminal CCA sequence in tRNAs without using a nucleic acid template. Adds these three nucleotides in the order of C, C, and A to the tRNA nucleotide-73, using CTP and ATP as substrates and producing inorganic pyrophosphate. tRNA 3'-terminal CCA addition is required both for tRNA processing and repair. Also involved in tRNA surveillance by mediating tandem CCA addition to generate a CCACCA at the 3' terminus of unstable tRNAs. While stable tRNAs receive only 3'-terminal CCA, unstable tRNAs are marked with CCACCA and rapidly degraded. The sequence is that of Multifunctional CCA protein from Nitrosomonas eutropha (strain DSM 101675 / C91 / Nm57).